The sequence spans 270 residues: uncharacterized protein (270 aa).

Residues 1–50 (LTEVVKAQSFTKAAENLYTSQPSISRDIKRLENDYDVKVFEFKHSKMTLT) form the HTH lysR-type domain. Residues 10–29 (FTKAAENLYTSQPSISRDIK) constitute a DNA-binding region (H-T-H motif).

This sequence belongs to the LysR transcriptional regulatory family.

This is an uncharacterized protein from Staphylococcus xylosus.